A 910-amino-acid polypeptide reads, in one-letter code: Staphylococcal nuclease domain-containing protein 1 (910 aa).

Ala-2 is modified (N-acetylalanine). TNase-like domains are found at residues 18-166, 193-328, and 341-496; these read TVQR…MWSE, KPVN…IWRD, and KQFV…LHSK. Position 103 is a phosphothreonine (Thr-103). Residue Lys-193 is modified to N6-acetyllysine. Residues Thr-235 and Thr-240 each carry the phosphothreonine modification. 2 consecutive short sequence motifs (nuclear localization signal) follow at residues 321–325 and 388–392; these read RRLRI and KKLRP. At Ser-426 the chain carries Phosphoserine. Lys-513 participates in a covalent cross-link: Glycyl lysine isopeptide (Lys-Gly) (interchain with G-Cter in SUMO2). Residues 525–660 form the TNase-like 4 domain; that stretch reads GRSEAVVEYV…KQRKEKVWAH (136 aa). Residue Lys-641 is modified to N6-acetyllysine. Ser-645 is modified (phosphoserine). The region spanning 729–787 is the Tudor domain; the sequence is APRRGEFCIAKFVDGEWYRARVEKVESPAKVHVFYIDYGNREILPSTRLGTLPPAFSTR. Thr-779 carries the post-translational modification Phosphothreonine. Residues Ser-785 and Ser-909 each carry the phosphoserine modification.

In terms of assembly, forms a ternary complex with STAT6 and POLR2A. Associates with the RNA-induced silencing complex (RISC). Interacts with the RISC components AGO2, FMR1 and TNRC6A. Interacts with GTF2E1 and GTF2E2. Interacts with PIM1. Interacts with STAT5. Interacts with SYT11 (via C2 2 domain); the interaction with SYT11 is direct. Phosphorylated by PIM1 in vitro.

It is found in the cytoplasm. The protein resides in the nucleus. Its subcellular location is the melanosome. It carries out the reaction Endonucleolytic cleavage to nucleoside 3'-phosphates and 3'-phosphooligonucleotide end-products.. Endonuclease that mediates miRNA decay of both protein-free and AGO2-loaded miRNAs. As part of its function in miRNA decay, regulates mRNAs involved in G1-to-S phase transition. Functions as a bridging factor between STAT6 and the basal transcription factor. Plays a role in PIM1 regulation of MYB activity. Functions as a transcriptional coactivator for STAT5. The chain is Staphylococcal nuclease domain-containing protein 1 (Snd1) from Mus musculus (Mouse).